A 383-amino-acid polypeptide reads, in one-letter code: Acetylornithine deacetylase (383 aa).

Zn(2+) is bound at residue H80. D82 is a catalytic residue. Zn(2+) is bound at residue D112. Residue E144 is part of the active site. The Zn(2+) site is built by E145, E169, and H355.

It belongs to the peptidase M20A family. ArgE subfamily. As to quaternary structure, homodimer. It depends on Zn(2+) as a cofactor. Co(2+) serves as cofactor. Glutathione is required as a cofactor.

It is found in the cytoplasm. It carries out the reaction N(2)-acetyl-L-ornithine + H2O = L-ornithine + acetate. It functions in the pathway amino-acid biosynthesis; L-arginine biosynthesis; L-ornithine from N(2)-acetyl-L-ornithine (linear): step 1/1. In terms of biological role, catalyzes the hydrolysis of the amide bond of N(2)-acetylated L-amino acids. Cleaves the acetyl group from N-acetyl-L-ornithine to form L-ornithine, an intermediate in L-arginine biosynthesis pathway, and a branchpoint in the synthesis of polyamines. This Shigella dysenteriae serotype 1 (strain Sd197) protein is Acetylornithine deacetylase.